A 229-amino-acid polypeptide reads, in one-letter code: 5'-methylthioadenosine/S-adenosylhomocysteine nucleosidase (229 aa).

Glu12 functions as the Proton acceptor in the catalytic mechanism. Substrate contacts are provided by residues Gly78, Ile152, and 173–174 (ME). Asp197 serves as the catalytic Proton donor.

Belongs to the PNP/UDP phosphorylase family. MtnN subfamily.

It catalyses the reaction S-adenosyl-L-homocysteine + H2O = S-(5-deoxy-D-ribos-5-yl)-L-homocysteine + adenine. It carries out the reaction S-methyl-5'-thioadenosine + H2O = 5-(methylsulfanyl)-D-ribose + adenine. The catalysed reaction is 5'-deoxyadenosine + H2O = 5-deoxy-D-ribose + adenine. It participates in amino-acid biosynthesis; L-methionine biosynthesis via salvage pathway; S-methyl-5-thio-alpha-D-ribose 1-phosphate from S-methyl-5'-thioadenosine (hydrolase route): step 1/2. Catalyzes the irreversible cleavage of the glycosidic bond in both 5'-methylthioadenosine (MTA) and S-adenosylhomocysteine (SAH/AdoHcy) to adenine and the corresponding thioribose, 5'-methylthioribose and S-ribosylhomocysteine, respectively. Also cleaves 5'-deoxyadenosine, a toxic by-product of radical S-adenosylmethionine (SAM) enzymes, into 5-deoxyribose and adenine. The protein is 5'-methylthioadenosine/S-adenosylhomocysteine nucleosidase of Haemophilus influenzae (strain PittEE).